A 372-amino-acid polypeptide reads, in one-letter code: Mannan endo-1,4-beta-mannosidase 8 (372 aa).

2 residues coordinate substrate: tryptophan 57 and asparagine 172. The active-site Proton donor is the glutamate 173. Tyrosine 253 contacts substrate. Glutamate 293 serves as the catalytic Nucleophile. Tryptophan 335 is a substrate binding site.

The protein belongs to the glycosyl hydrolase 5 (cellulase A) family. In terms of tissue distribution, expressed in stems and leaves and seeds.

The enzyme catalyses Random hydrolysis of (1-&gt;4)-beta-D-mannosidic linkages in mannans, galactomannans and glucomannans.. This is Mannan endo-1,4-beta-mannosidase 8 (MAN8) from Oryza sativa subsp. japonica (Rice).